A 211-amino-acid chain; its full sequence is uncharacterized protein (211 aa).

This is an uncharacterized protein from Acidianus convivator (ATV).